Reading from the N-terminus, the 63-residue chain is Beta-defensin 35 (63 aa).

Positions 1 to 23 (MPQTFFVFCFLFFVFLQLFPGTG) are cleaved as a signal peptide. Cystine bridges form between cysteine 31–cysteine 58, cysteine 38–cysteine 52, and cysteine 42–cysteine 59.

The protein belongs to the beta-defensin family. As to expression, expressed in testis, epididymis (caput, corpus and cauda), kidney and neonatal and adult brain.

It localises to the secreted. Has antibacterial activity. In Mus musculus (Mouse), this protein is Beta-defensin 35 (Defb35).